Reading from the N-terminus, the 28-residue chain is Endoglucanase (28 aa).

E20 acts as the Nucleophile in catalysis.

This sequence belongs to the glycosyl hydrolase 5 (cellulase A) family.

It localises to the cell membrane. It catalyses the reaction Endohydrolysis of (1-&gt;4)-beta-D-glucosidic linkages in cellulose, lichenin and cereal beta-D-glucans.. This is Endoglucanase from Schizophyllum commune (Split gill fungus).